The primary structure comprises 307 residues: 17-beta-hydroxysteroid dehydrogenase type 3 (307 aa).

A helical membrane pass occupies residues 6–26 (IIFVLTGTCAILVFGGKIASL). Position 47–76 (47–76 (GKWAVITGGSDGIGRAYAEELSKQGMSVII)) interacts with NADP(+). S187 contributes to the substrate binding site. The active-site Proton acceptor is the Y200.

The protein belongs to the short-chain dehydrogenases/reductases (SDR) family. Expression shows strong sexual dimorphism. In female, highly expressed in ovaries, and at lower levels in skin muscle, eyes and liver. In males, strongly expressed in liver and at lower levels in testis, spleen, kidney, intestine and muscle.

It is found in the endoplasmic reticulum. The protein localises to the membrane. It catalyses the reaction a 17beta-hydroxy steroid + NADP(+) = a 17-oxo steroid + NADPH + H(+). The catalysed reaction is testosterone + NADP(+) = androst-4-ene-3,17-dione + NADPH + H(+). It carries out the reaction 3beta-hydroxyandrost-5-en-17-one + NADPH + H(+) = androst-5-en-3beta,17beta-diol + NADP(+). The enzyme catalyses 3beta-hydroxy-5alpha-androstan-17-one + NADPH + H(+) = 5alpha-androstane-3beta,17beta-diol + NADP(+). It catalyses the reaction androst-4-ene-3,11,17-trione + NADPH + H(+) = 17beta-hydroxyandrost-4-ene-3,11-dione + NADP(+). The catalysed reaction is 11beta-hydroxyandrost-4-ene-3,17-dione + NADPH + H(+) = 11beta,17beta-dihydroxyandrost-4-ene-3-one + NADP(+). The protein operates within hormone biosynthesis; testosterone biosynthesis. It participates in steroid metabolism. Catalyzes the conversion of 17-oxosteroids to 17beta-hydroxysteroids in the presence of NADPH. Favors the reduction of androstenedione to testosterone. Testosterone is the key androgen driving male development and function. Among further tested androgens epiandrosterone and dehydroepiandrosterone are accepted as substrates and reduced at C-17. Can also reduce 11-ketoandrostenedione as well as 11beta-hydroxyandrostenedione at C-17 to the respective testosterone forms. Cannot use androsterone and androstanedione as substrates. This is 17-beta-hydroxysteroid dehydrogenase type 3 (hsd17b3) from Danio rerio (Zebrafish).